A 317-amino-acid chain; its full sequence is Carbamate kinase (317 aa).

It belongs to the carbamate kinase family. In terms of assembly, homodimer.

The catalysed reaction is hydrogencarbonate + NH4(+) + ATP = carbamoyl phosphate + ADP + H2O + H(+). Its pathway is metabolic intermediate metabolism; carbamoyl phosphate degradation; CO(2) and NH(3) from carbamoyl phosphate: step 1/1. The chain is Carbamate kinase (CBK) from Giardia intestinalis (Giardia lamblia).